Consider the following 312-residue polypeptide: Aldehyde reductase YPR1 (312 aa).

Tyr-56 (proton donor) is an active-site residue. His-112 contributes to the substrate binding site. 220-274 serves as a coordination point for NADP(+); the sequence is SPFGSANAPLLKEQAIIDMAKKHGVEPAQLIISWSIQRGYVVLAKSVNPERIVSN.

This sequence belongs to the aldo/keto reductase family.

Its subcellular location is the cytoplasm. It catalyses the reaction a primary alcohol + NADP(+) = an aldehyde + NADPH + H(+). It carries out the reaction 2-methylbutan-1-ol + NADP(+) = 2-methylbutanal + NADPH + H(+). The catalysed reaction is hexan-1-ol + NADP(+) = hexanal + NADPH + H(+). Functionally, aldehyde reductase with broad substrate specificity, catalyzing the NADPH-dependent reduction of aldehydes into the corresponding alcohols. In vitro, displays high specific activity towards 2-methylbutanal (2-methylbutyraldehyde), as well as other aldehydes such as hexanal (a toxic lipid peroxidation product and phytoalexin), but exhibits extremely low activity as a glycerol dehydrogenase. Seems to contribute to 2-methylbutanal reduction in vivo, and may therefore play a role in isoleucine catabolism and fusel alcohol formation. The sequence is that of Aldehyde reductase YPR1 (YPR1) from Saccharomyces cerevisiae (strain ATCC 204508 / S288c) (Baker's yeast).